A 51-amino-acid polypeptide reads, in one-letter code: Small ribosomal subunit protein eS31 (51 aa).

The Zn(2+) site is built by Cys-22, Cys-25, Cys-40, and Cys-43. A C4-type zinc finger spans residues 22–43; it reads CPRCGPGVFMADHGDRWACGRC.

The protein belongs to the eukaryotic ribosomal protein eS31 family. In terms of assembly, part of the 30S ribosomal subunit. Zn(2+) is required as a cofactor.

In Pyrococcus abyssi (strain GE5 / Orsay), this protein is Small ribosomal subunit protein eS31.